A 276-amino-acid chain; its full sequence is uncharacterized protein (276 aa).

A signal peptide spans 1–25 (MNKKRLLPKASLGALFMLFGTALTA). Residue C26 is the site of N-palmitoyl cysteine attachment. C26 is lipidated: S-diacylglycerol cysteine.

The protein belongs to the MG439/MG440 family.

The protein localises to the cell membrane. This is an uncharacterized protein from Mycoplasma pneumoniae (strain ATCC 29342 / M129 / Subtype 1) (Mycoplasmoides pneumoniae).